We begin with the raw amino-acid sequence, 336 residues long: Ferrochelatase (336 aa).

The Fe cation site is built by His-206 and Glu-287.

It belongs to the ferrochelatase family.

The protein resides in the cytoplasm. It carries out the reaction heme b + 2 H(+) = protoporphyrin IX + Fe(2+). It functions in the pathway porphyrin-containing compound metabolism; protoheme biosynthesis; protoheme from protoporphyrin-IX: step 1/1. Catalyzes the ferrous insertion into protoporphyrin IX. The chain is Ferrochelatase from Neisseria meningitidis serogroup B (strain ATCC BAA-335 / MC58).